We begin with the raw amino-acid sequence, 329 residues long: Anthranilate phosphoribosyltransferase (329 aa).

5-phospho-alpha-D-ribose 1-diphosphate contacts are provided by residues glycine 78, 81–82 (GD), 88–91 (NLST), 106–114 (KHGNRAASS), and serine 118. Residue glycine 78 participates in anthranilate binding. Serine 90 is a Mg(2+) binding site. Asparagine 109 contributes to the anthranilate binding site. Arginine 164 contacts anthranilate. Aspartate 221 and glutamate 222 together coordinate Mg(2+).

It belongs to the anthranilate phosphoribosyltransferase family. Homodimer. Mg(2+) serves as cofactor.

The enzyme catalyses N-(5-phospho-beta-D-ribosyl)anthranilate + diphosphate = 5-phospho-alpha-D-ribose 1-diphosphate + anthranilate. The protein operates within amino-acid biosynthesis; L-tryptophan biosynthesis; L-tryptophan from chorismate: step 2/5. Functionally, catalyzes the transfer of the phosphoribosyl group of 5-phosphorylribose-1-pyrophosphate (PRPP) to anthranilate to yield N-(5'-phosphoribosyl)-anthranilate (PRA). The chain is Anthranilate phosphoribosyltransferase from Thermus thermophilus (strain ATCC BAA-163 / DSM 7039 / HB27).